The chain runs to 426 residues: Glutamate-1-semialdehyde 2,1-aminomutase (426 aa).

Lys265 is modified (N6-(pyridoxal phosphate)lysine).

It belongs to the class-III pyridoxal-phosphate-dependent aminotransferase family. HemL subfamily. Homodimer. The cofactor is pyridoxal 5'-phosphate.

It is found in the cytoplasm. The enzyme catalyses (S)-4-amino-5-oxopentanoate = 5-aminolevulinate. It functions in the pathway porphyrin-containing compound metabolism; protoporphyrin-IX biosynthesis; 5-aminolevulinate from L-glutamyl-tRNA(Glu): step 2/2. The sequence is that of Glutamate-1-semialdehyde 2,1-aminomutase from Shigella boydii serotype 4 (strain Sb227).